The following is a 631-amino-acid chain: Serine/threonine-protein kinase PLK3 (631 aa).

The tract at residues 1–59 is disordered; sequence MEPAAGFLSPRPFPRAAVPSAPPAGPGPPANASPRSEPEVLAGPRAPDPPGRLITDPLS. The segment covering 20-31 has biased composition (pro residues); the sequence is SAPPAGPGPPAN. Residues 63–315 form the Protein kinase domain; that stretch reads YTKGRLLGKG…IEQILRHDFF (253 aa). ATP is bound by residues 69-77 and Lys-92; that span reads LGKGGFARC. The Proton acceptor role is filled by Asp-186. POLO box domains are found at residues 448–526 and 547–630; these read WVSK…YMEQ and LLLQ…DQSP.

The protein belongs to the protein kinase superfamily. Ser/Thr protein kinase family. CDC5/Polo subfamily. As to quaternary structure, interacts (via the POLO-box domain) with CIB1; leading to inhibit PLK3 kinase activity. Interacts with GOLGB1. Phosphorylated in an ATM-dependent manner following DNA damage. Phosphorylated as cells enter mitosis and dephosphorylated as cells exit mitosis. As to expression, expressed in skin.

The protein resides in the cytoplasm. Its subcellular location is the nucleus. The protein localises to the nucleolus. It localises to the golgi apparatus. It is found in the cytoskeleton. The protein resides in the microtubule organizing center. Its subcellular location is the centrosome. It catalyses the reaction L-seryl-[protein] + ATP = O-phospho-L-seryl-[protein] + ADP + H(+). It carries out the reaction L-threonyl-[protein] + ATP = O-phospho-L-threonyl-[protein] + ADP + H(+). Serine/threonine-protein kinase involved in cell cycle regulation, response to stress and Golgi disassembly. Polo-like kinases act by binding and phosphorylating proteins that are already phosphorylated on a specific motif recognized by the POLO box domains. Phosphorylates ATF2, BCL2L1, CDC25A, CDC25C, CHEK2, HIF1A, JUN, p53/TP53, p73/TP73, PTEN, TOP2A and VRK1. Involved in cell cycle regulation: required for entry into S phase and cytokinesis. Phosphorylates BCL2L1, leading to regulate the G2 checkpoint and progression to cytokinesis during mitosis. Plays a key role in response to stress: rapidly activated upon stress stimulation, such as ionizing radiation, reactive oxygen species (ROS), hyperosmotic stress, UV irradiation and hypoxia. Involved in DNA damage response and G1/S transition checkpoint by phosphorylating CDC25A, p53/TP53 and p73/TP73. Phosphorylates p53/TP53 in response to reactive oxygen species (ROS), thereby promoting p53/TP53-mediated apoptosis. Phosphorylates CHEK2 in response to DNA damage, promoting the G2/M transition checkpoint. Phosphorylates the transcription factor p73/TP73 in response to DNA damage, leading to inhibit p73/TP73-mediated transcriptional activation and pro-apoptotic functions. Phosphorylates HIF1A and JUN is response to hypoxia. Phosphorylates ATF2 following hyperosmotic stress in corneal epithelium. Also involved in Golgi disassembly during the cell cycle: part of a MEK1/MAP2K1-dependent pathway that induces Golgi fragmentation during mitosis by mediating phosphorylation of VRK1. May participate in endomitotic cell cycle, a form of mitosis in which both karyokinesis and cytokinesis are interrupted and is a hallmark of megakaryocyte differentiation, via its interaction with CIB1. This Mus musculus (Mouse) protein is Serine/threonine-protein kinase PLK3 (Plk3).